The following is a 105-amino-acid chain: uncharacterized protein (105 aa).

Helical transmembrane passes span valine 7–leucine 26 and valine 30–isoleucine 52.

It localises to the cell membrane. This is an uncharacterized protein from Archaeoglobus fulgidus (strain ATCC 49558 / DSM 4304 / JCM 9628 / NBRC 100126 / VC-16).